The chain runs to 303 residues: MKKIKCALIGPGNIGTDLLAKLQRSPVLEPVWMVGIDPASDGLKRASEMGIKTTAEGVDGLIPHMKADGVQIVFDATSAYVHAENSAKVNAQGAMMIDLTPAAIGPYCVPPVNLKQHVGRREMNVNMVTCGGQATIPMVYAVSRVQPVAYGEIVATVSSRSVGPGTRKNIDEFTRTTAGAVEKVGGARQGKAIIIINPAEPPLIMRDTVHCLVEGKPDEAAITQSIHDMIREVQKYVPGYKLVNGPVFDGQRVSVFMEVEGLGDYLPKYAGNLDIMTAAAARTAEMFAEEILKGELVLEPVAA.

Cysteine 130 functions as the Acyl-thioester intermediate in the catalytic mechanism. Residues 161 to 169 (SVGPGTRKN) and asparagine 272 contribute to the NAD(+) site.

This sequence belongs to the acetaldehyde dehydrogenase family.

The catalysed reaction is acetaldehyde + NAD(+) + CoA = acetyl-CoA + NADH + H(+). The chain is Acetaldehyde dehydrogenase from Verminephrobacter eiseniae (strain EF01-2).